We begin with the raw amino-acid sequence, 434 residues long: Cysteine proteinase 6 (434 aa).

A signal peptide spans 1-19 (MKVLSALCVLLVSVATAKQ). Positions 20 to 113 (QLSELQYRNA…SEKVFGGVQA (94 aa)) are cleaved as a propeptide — activation peptide. Intrachain disulfides connect cysteine 133–cysteine 178 and cysteine 169–cysteine 211. Cysteine 136 is an active-site residue. A glycan (N-linked (GlcNAc...) asparagine) is linked at asparagine 227. A disulfide bond links cysteine 269 and cysteine 416. Histidine 276 is an active-site residue. The disordered stretch occupies residues 285–384 (SGSSGSQSQS…GGNSNSGDYP (100 aa)). Low complexity predominate over residues 288 to 347 (SGSQSQSAGSQSQSSNNNWSESSQSQDSNSWSQSSQSQSSQDSNSWSQSSQSQGSNSFTG). Residue asparagine 305 is glycosylated (N-linked (GlcNAc...) asparagine). The span at 348 to 358 (AGTGSGSGSVS) shows a compositional bias: gly residues. The segment covering 359–381 (GSGSASGSSSFSGSSNGGNSNSG) has biased composition (low complexity). Asparagine 394 is an active-site residue.

The protein belongs to the peptidase C1 family.

The protein localises to the lysosome. This is Cysteine proteinase 6 (cprF) from Dictyostelium discoideum (Social amoeba).